A 504-amino-acid chain; its full sequence is NADH-quinone oxidoreductase subunit N (504 aa).

14 helical membrane passes run I9–I29, A38–W58, V78–W98, L114–F134, L135–K155, Y164–C184, I216–F236, Y254–L274, L282–I302, R309–L329, I341–I361, V392–G412, L425–I447, and F476–V496.

It belongs to the complex I subunit 2 family. In terms of assembly, NDH-1 is composed of 13 different subunits. Subunits NuoA, H, J, K, L, M, N constitute the membrane sector of the complex.

The protein localises to the cell inner membrane. The enzyme catalyses a quinone + NADH + 5 H(+)(in) = a quinol + NAD(+) + 4 H(+)(out). In terms of biological role, NDH-1 shuttles electrons from NADH, via FMN and iron-sulfur (Fe-S) centers, to quinones in the respiratory chain. The immediate electron acceptor for the enzyme in this species is believed to be ubiquinone. Couples the redox reaction to proton translocation (for every two electrons transferred, four hydrogen ions are translocated across the cytoplasmic membrane), and thus conserves the redox energy in a proton gradient. This is NADH-quinone oxidoreductase subunit N from Blochmanniella floridana.